The following is an 80-amino-acid chain: Type VII secretion system accessory factor EsaB (80 aa).

Belongs to the EsaB family.

Its subcellular location is the cytoplasm. Its function is as follows. Seems to regulate secreted factors that contribute to the establishment of persistent infections in the host. The protein is Type VII secretion system accessory factor EsaB of Staphylococcus aureus (strain COL).